The sequence spans 652 residues: Chaperone protein HtpG (652 aa).

The a; substrate-binding stretch occupies residues 1–348 (MATDAHKETL…SDDLPLNVSR (348 aa)). Residues 349–565 (ELLQHNPLLD…EYDFGMGMQR (217 aa)) form a b region. The interval 566–652 (LLKAAGHAMP…EAKSNAARGD (87 aa)) is c.

It belongs to the heat shock protein 90 family. Homodimer.

Its subcellular location is the cytoplasm. In terms of biological role, molecular chaperone. Has ATPase activity. The protein is Chaperone protein HtpG of Alkalilimnicola ehrlichii (strain ATCC BAA-1101 / DSM 17681 / MLHE-1).